A 50-amino-acid chain; its full sequence is Small nuclear ribonucleoprotein Sm D2 (50 aa).

A disordered region spans residues 1–36 (MSLLNKPKSEMTPEELQKREEEEFNTGPLSVXTQSX). Ser-2 is modified (N-acetylserine). Residues Lys-6 and Lys-8 each participate in a glycyl lysine isopeptide (Lys-Gly) (interchain with G-Cter in SUMO2) cross-link. Positions 7–21 (PKSEMTPEELQKREE) are enriched in basic and acidic residues. Residue Ser-9 is modified to Phosphoserine. Thr-12 is modified (phosphothreonine).

This sequence belongs to the snRNP core protein family. In terms of assembly, core component of the spliceosomal U1, U2, U4 and U5 small nuclear ribonucleoproteins (snRNPs), the building blocks of the spliceosome. Most spliceosomal snRNPs contain a common set of Sm proteins, SNRPB, SNRPD1, SNRPD2, SNRPD3, SNRPE, SNRPF and SNRPG that assemble in a heptameric protein ring on the Sm site of the small nuclear RNA to form the core snRNP. Component of the U1 snRNP. The U1 snRNP is composed of the U1 snRNA and the 7 core Sm proteins SNRPB, SNRPD1, SNRPD2, SNRPD3, SNRPE, SNRPF and SNRPG, and at least three U1 snRNP-specific proteins SNRNP70/U1-70K, SNRPA/U1-A and SNRPC/U1-C. Component of the U4/U6-U5 tri-snRNP complex composed of the U4, U6 and U5 snRNAs and at least PRPF3, PRPF4, PRPF6, PRPF8, PRPF31, SNRNP200, TXNL4A, SNRNP40, SNRPB, SNRPD1, SNRPD2, SNRPD3, SNRPE, SNRPF, SNRPG, DDX23, CD2BP2, PPIH, SNU13, EFTUD2, SART1 and USP39, plus LSM2, LSM3, LSM4, LSM5, LSM6, LSM7 and LSM8. Component of the minor spliceosome, which splices U12-type introns. Part of the SMN-Sm complex that contains SMN1, GEMIN2/SIP1, DDX20/GEMIN3, GEMIN4, GEMIN5, GEMIN6, GEMIN7, GEMIN8, STRAP/UNRIP and the Sm proteins SNRPB, SNRPD1, SNRPD2, SNRPD3, SNRPE, SNRPF and SNRPG; catalyzes core snRNPs assembly. Forms a 6S pICln-Sm complex composed of CLNS1A/pICln, SNRPD1, SNRPD2, SNRPE, SNRPF and SNRPG; ring-like structure where CLNS1A/pICln mimics additional Sm proteins and which is unable to assemble into the core snRNP. Interacts with SMN1; the interaction is direct. Interacts with GEMIN2; the interaction is direct. Interacts with SNRPD1; the interaction is direct. Interacts with SNRPF; the interaction is direct.

It localises to the cytoplasm. It is found in the cytosol. Its subcellular location is the nucleus. Its function is as follows. Plays a role in pre-mRNA splicing as a core component of the spliceosomal U1, U2, U4 and U5 small nuclear ribonucleoproteins (snRNPs), the building blocks of the spliceosome. Component of both the pre-catalytic spliceosome B complex and activated spliceosome C complexes. As a component of the minor spliceosome, involved in the splicing of U12-type introns in pre-mRNAs. This chain is Small nuclear ribonucleoprotein Sm D2 (SNRPD2), found in Sus scrofa (Pig).